The following is a 332-amino-acid chain: Sphingolipid delta(4)-desaturase DES1-like (332 aa).

The next 3 membrane-spanning stretches (helical) occupy residues 55-75 (PWAF…AAIL), 83-103 (ILSI…LAIH), and 119-139 (CLGI…FQKY). The Histidine box-1 motif lies at 103–107 (HELSH). The Histidine box-2 signature appears at 140-144 (HLEHH). The next 3 membrane-spanning stretches (helical) occupy residues 164–184 (LVTN…FYAL), 197–217 (WEFI…LFFG), and 222–242 (AYLI…GHFI). Residues 271–275 (HNEHH) carry the Histidine box-3 motif.

Belongs to the fatty acid desaturase type 1 family. DEGS subfamily. Specifically expressed in flowers.

The protein localises to the endoplasmic reticulum membrane. The catalysed reaction is an N-acylsphinganine + 2 Fe(II)-[cytochrome b5] + O2 + 2 H(+) = an N-acylsphing-4-enine + 2 Fe(III)-[cytochrome b5] + 2 H2O. In terms of biological role, sphingolipid-delta-4-desaturase required for the biosynthesis of delta-4-unsaturated sphingolipids and derivatives. May be required for the biosynthesis of glucosylceramides. This chain is Sphingolipid delta(4)-desaturase DES1-like, found in Arabidopsis thaliana (Mouse-ear cress).